The following is a 620-amino-acid chain: Chaperone protein HscA homolog (620 aa).

This sequence belongs to the heat shock protein 70 family.

In terms of biological role, chaperone involved in the maturation of iron-sulfur cluster-containing proteins. Has a low intrinsic ATPase activity which is markedly stimulated by HscB. The chain is Chaperone protein HscA homolog from Colwellia psychrerythraea (strain 34H / ATCC BAA-681) (Vibrio psychroerythus).